The chain runs to 455 residues: Retinoic acid receptor beta (455 aa).

The modulating stretch occupies residues 1-87; that stretch reads MTTSSRTCPV…PLPPPRVYKP (87 aa). Residues 44–78 are disordered; it reads LQSHPPTSGCSTPSPATVETQSTSSEELVPSPPSP. Positions 47–66 are enriched in polar residues; that stretch reads HPPTSGCSTPSPATVETQST. 2 NR C4-type zinc fingers span residues 88–108 and 124–148; these read CFVCQDKSSGYHYGVSACEGC and CHRDKNCVINKVTRNRCQYCRLQKC. Residues 88–153 constitute a DNA-binding region (nuclear receptor); it reads CFVCQDKSSG…RLQKCFEVGM (66 aa). Residues 154–182 form a hinge region; it reads SKESVRNDRNKKKKEPTKQESTENYEMTA. Positions 183–417 constitute an NR LBD domain; sequence ELDDLTEKIR…PLIQEMLENS (235 aa). The segment at 416 to 455 is disordered; the sequence is NSEGHEPLTPTSNGNTAEHSPSISPSSVDNSSVSQSPMVQ. Residues 424-434 are compositionally biased toward polar residues; that stretch reads TPTSNGNTAEH. Over residues 435–455 the composition is skewed to low complexity; sequence SPSISPSSVDNSSVSQSPMVQ.

The protein belongs to the nuclear hormone receptor family. NR1 subfamily. As to quaternary structure, heterodimer; with a RXR molecule. Binds DNA preferentially as a RAR/RXR heterodimer.

It is found in the nucleus. In terms of biological role, receptor for retinoic acid. Retinoic acid receptors bind as heterodimers to their target response elements in response to their ligands, all-trans or 9-cis retinoic acid, and regulate gene expression in various biological processes. The RAR/RXR heterodimers bind to the retinoic acid response elements (RARE) composed of tandem 5'-AGGTCA-3' sites known as DR1-DR5. Required for limb and craniofacial development. The chain is Retinoic acid receptor beta (RARB) from Gallus gallus (Chicken).